The primary structure comprises 177 residues: Large ribosomal subunit protein uL6 (177 aa).

Belongs to the universal ribosomal protein uL6 family. In terms of assembly, part of the 50S ribosomal subunit.

Functionally, this protein binds to the 23S rRNA, and is important in its secondary structure. It is located near the subunit interface in the base of the L7/L12 stalk, and near the tRNA binding site of the peptidyltransferase center. In Klebsiella pneumoniae (strain 342), this protein is Large ribosomal subunit protein uL6.